A 136-amino-acid polypeptide reads, in one-letter code: Protein PsiE homolog (136 aa).

A run of 4 helical transmembrane segments spans residues 15-35 (ILQT…VVFL), 55-75 (YELV…ALIV), 82-102 (FHFP…RLII), and 108-128 (PLDV…LWLC).

Belongs to the PsiE family.

It localises to the cell inner membrane. This chain is Protein PsiE homolog, found in Enterobacter sp. (strain 638).